Reading from the N-terminus, the 266-residue chain is Electron transfer flavoprotein subunit beta (266 aa).

This sequence belongs to the ETF beta-subunit/FixA family. Heterodimer of an alpha and a beta subunit. It depends on FAD as a cofactor. AMP serves as cofactor.

The electron transfer flavoprotein serves as a specific electron acceptor for other dehydrogenases. It transfers the electrons to the main respiratory chain via ETF-ubiquinone oxidoreductase (ETF dehydrogenase). The polypeptide is Electron transfer flavoprotein subunit beta (etfB) (Mycobacterium bovis (strain ATCC BAA-935 / AF2122/97)).